The chain runs to 341 residues: Phosphate acyltransferase (341 aa).

It belongs to the PlsX family. Homodimer. Probably interacts with PlsY.

It localises to the cytoplasm. It carries out the reaction a fatty acyl-[ACP] + phosphate = an acyl phosphate + holo-[ACP]. Its pathway is lipid metabolism; phospholipid metabolism. Its function is as follows. Catalyzes the reversible formation of acyl-phosphate (acyl-PO(4)) from acyl-[acyl-carrier-protein] (acyl-ACP). This enzyme utilizes acyl-ACP as fatty acyl donor, but not acyl-CoA. The sequence is that of Phosphate acyltransferase from Vibrio cholerae serotype O1 (strain ATCC 39541 / Classical Ogawa 395 / O395).